The chain runs to 456 residues: Enolase (456 aa).

Gln164 provides a ligand contact to (2R)-2-phosphoglycerate. Catalysis depends on Glu207, which acts as the Proton donor. Mg(2+) contacts are provided by Asp244, Glu287, and Asp314. (2R)-2-phosphoglycerate-binding residues include Lys339, Arg368, Ser369, and Lys390. The Proton acceptor role is filled by Lys339.

It belongs to the enolase family. Component of the RNA degradosome, a multiprotein complex involved in RNA processing and mRNA degradation. The cofactor is Mg(2+).

It localises to the cytoplasm. Its subcellular location is the secreted. The protein resides in the cell surface. It catalyses the reaction (2R)-2-phosphoglycerate = phosphoenolpyruvate + H2O. It functions in the pathway carbohydrate degradation; glycolysis; pyruvate from D-glyceraldehyde 3-phosphate: step 4/5. In terms of biological role, catalyzes the reversible conversion of 2-phosphoglycerate (2-PG) into phosphoenolpyruvate (PEP). It is essential for the degradation of carbohydrates via glycolysis. This Francisella tularensis subsp. holarctica (strain LVS) protein is Enolase.